Reading from the N-terminus, the 92-residue chain is Precursor of CEP12 (92 aa).

Positions 1 to 30 are cleaved as a signal peptide; that stretch reads MVNRDNSIVALSFFMLFLLVLHLHFETTTA. Residues 31–70 constitute a propeptide that is removed on maturation; it reads ARKPVRVFGPPSSIEWSPPSPPKDDFEWFEINIYKNIEQT. The tract at residues 70 to 92 is disordered; it reads TAFRPTGQGPSQGIGHKDPPGAP. A hydroxyproline mark is found at Pro74 and Pro79. Residues 86 to 92 constitute a propeptide that is removed on maturation; sequence KDPPGAP.

It belongs to the C-terminally encoded plant signaling peptide (CEP) family. Interacts with CEP receptors (e.g. CEPR1 and CEPR2). Post-translationally, the mature small signaling peptide is generated by proteolytic processing of the longer precursor.

Its subcellular location is the secreted. It localises to the extracellular space. It is found in the apoplast. Functionally, extracellular signaling peptide that may regulate primary root growth rate and systemic nitrogen (N)-demand signaling. This chain is Precursor of CEP12, found in Arabidopsis thaliana (Mouse-ear cress).